The sequence spans 435 residues: Keratin, type I cytoskeletal 18 (435 aa).

Residues 1–28 are compositionally biased toward low complexity; that stretch reads MSLRSSYSVRSSTSQVPVSQMSQMSQMS. A disordered region spans residues 1 to 36; it reads MSLRSSYSVRSSTSQVPVSQMSQMSQMSIKRTTNVP. Positions 2 to 88 are head; it reads SLRSSYSVRS…TGATGDIMGN (87 aa). The tract at residues 89–123 is coil 1A; it reads EKMAMQNLNDRLASYLRSETLEQANSKLELKIREA. The IF rod domain maps to 89-399; sequence EKMAMQNLND…RLLDGGDFKL (311 aa). Residues 124–140 are linker 1; sequence LEKKGPEVCDYSRFQPI. The interval 141–232 is coil 1B; sequence IDDLRRKIFD…KNHDNEVMEL (92 aa). The segment at 233–256 is linker 12; that stretch reads RNQISHSGVQVDVDAPKGQDLAKI. Positions 257–394 are coil 2; it reads MEEIRSKYEK…IATYRRLLDG (138 aa). The interval 395 to 435 is tail; sequence GDFKLQDALEEQKRVKVMTVTQTLVDGKVVSSSTETKEKKF.

Belongs to the intermediate filament family. Heterotetramer of two type I and two type II keratins. Keratin-18 associates with keratin-8. Post-translationally, phosphorylated. Proteolytically cleaved by caspases during epithelial cell apoptosis. In terms of tissue distribution, abundantly expressed in an even distribution throughout the optic nerve, localizing specifically to the astrocyte domains. Moderately expressed in spinal cord, brain, liver and oocytes.

In terms of biological role, when phosphorylated, plays a role in filament reorganization. The chain is Keratin, type I cytoskeletal 18 (krt18) from Carassius auratus (Goldfish).